Here is a 719-residue protein sequence, read N- to C-terminus: MKIDSPEFFNNREISWLQFNERVLGEVTDTRNPLMERFKFLGIFSSNLDEFYMVRVGGLKDEVLAGFNKPENKQQLTPKQQLRAIATKTKELVDQQYEAFKDVTQALKAEGISFLKHDELNEMQSEYVKTFFREQVFPVLTPVAVDAYRPFPMLSSKSLNIATALEAEDGSKRNLALVQVPAVLPRFVDLPVDDEETTAVILLEDVIISFIDSLFKGYHVLSAMPFRITRNADLPFHEEGTHDLLKLIEKELKKRRWGVGIRLEIQKNAINTNLLNMLRDVLDLQDRDIYAVDGPIDLTFAFAFYSQIGVEYDHLIYQTIMPVEPPALEKSKKLFDQILQQDYLLHHPYHTFDPIVRLIVQAANDPNVLAIKQTLYRVSGDSPIIKALKTAAENGKQVTVLVELKARFDEAKNIEWAKQLEKAGAHVIYGYSDLKTHSKITLIVRLQEGRIQRFVHLGTGNYNDSTAKLYTDIGLLTAKEQIAEDATNFFNWLSGYGEQPEWNALHTSPNSMLEKFLSLIDEEIKYHKKHGNGRIVAKMNSLTEKDIIVKLYQASRAGVRIELIVRGVCCLRPQIKGVSENIRVTSVVDRYLEHSRIFYFHHNGDDLIYCSSADWMTRNMRKRIEILFPIADEEQKNYIKDCLALTMADNVKAREQDDSGNYHYVTKGKQECESQILIQLYTNGKLKAKPSFEHPLEQKWTPVERAEEKITFDPTTSKK.

Asparagine 47 is an ATP binding site. 2 residues coordinate Mg(2+): arginine 377 and arginine 407. Histidine 437 acts as the Phosphohistidine intermediate in catalysis. ATP is bound by residues tyrosine 470, arginine 566, and histidine 594.

It belongs to the polyphosphate kinase 1 (PPK1) family. Requires Mg(2+) as cofactor. Post-translationally, an intermediate of this reaction is the autophosphorylated ppk in which a phosphate is covalently linked to a histidine residue through a N-P bond.

It carries out the reaction [phosphate](n) + ATP = [phosphate](n+1) + ADP. Catalyzes the reversible transfer of the terminal phosphate of ATP to form a long-chain polyphosphate (polyP). This is Polyphosphate kinase from Exiguobacterium sibiricum (strain DSM 17290 / CCUG 55495 / CIP 109462 / JCM 13490 / 255-15).